The chain runs to 137 residues: MLQPKRTKFRKQMKGRNRGLALRGSKVSFGDFGLKATGRGRITARQIEAARRAMTRHVKRGGKIWIRVFPDKPITAKPLEVRMGSGKGGVEYWVAQIRPGKVLYEMDGVSEELAREAFALAAAKLPVTTTFVKRSVM.

This sequence belongs to the universal ribosomal protein uL16 family. Part of the 50S ribosomal subunit.

Binds 23S rRNA and is also seen to make contacts with the A and possibly P site tRNAs. The sequence is that of Large ribosomal subunit protein uL16 from Cellvibrio japonicus (strain Ueda107) (Pseudomonas fluorescens subsp. cellulosa).